The chain runs to 199 residues: Cell division protein SepF (199 aa).

The tract at residues 15-79 is disordered; that stretch reads TEDGDETEVQ…PQPQQKSSTE (65 aa).

It belongs to the SepF family. In terms of assembly, homodimer. Interacts with FtsZ.

It localises to the cytoplasm. In terms of biological role, cell division protein that is part of the divisome complex and is recruited early to the Z-ring. Probably stimulates Z-ring formation, perhaps through the cross-linking of FtsZ protofilaments. Its function overlaps with FtsA. This is Cell division protein SepF from Streptococcus sanguinis (strain SK36).